The chain runs to 837 residues: MSAGRLWSSLLLLLPLFCSKSSSCGLSTHVEIGHRALEFLRLQDGRINYKELILEHQDAYQAGTVFPDAFYPSICKRGKYHDVSERTHWTPFLNASIHYIRENYPLPWEKDTEKLVAFLFGITSHMVADLSWHNLGFLRTMGAIDFYNSYSDAHSAGDFGGDVLSQFEFNFNYLSRRWYVPVRDLLRIYDNLYGRKVITKDVLVDCTYLQFLEMHGEMFAVSKLYSTYSTKSPFLVEQFQDYFLGGLDDMAFWSTNIYRLTSFMLENGTSDCNLPENPLFISCDGRNHTLSGSKVQKNDFHRNLTMFISRDIRKNLNYTERGVFYSTGSWARPESVTFMYQTLERNLRLMLAGSSQKNLNHVSSPSASYTLSVPYARLGWVMTSADLNQDGHGDLVVGAPGYSHPGRFQIGRVYIIYGNDLGLPPIDLDLNKEGILEGFQPSGRFGSALAVLDFNQDGLPDLAVGAPSVGSGQLTYNGSVYVYYGSQQGRLSSSPNVTISCKDTYCNLGWTLLATDADGDGRHDLVISSPFAPGGRKQKGIVATFYSHPRRNDKELLTLEEADWKVNGEEDFSWFGYSLHGVTVANRSLLLIGSPTWKNVSRMARSSHKKNQEEKSLGKVYGYFLPNRQSTITISGDKAMGKLGTSLSSGYVRVNGTLTQVLLVGAPTHDDVSKMAFLTMTLHQGGATRMYELAPEKTQPALLSTFSGDRRFSRFGSVLHLTDLDDDGLDEIIMAAPLRITDVTSGLLGGEDGRVYIYNGMYTTLGDMTGKCKSWMTPCPEEKAQYVLTSPEASSRFGSSLVSVRSKGRNQVVVAAGRSSWGARLSGALHVYSFSSD.

The N-terminal stretch at 1 to 23 is a signal peptide; it reads MSAGRLWSSLLLLLPLFCSKSSS. N-linked (GlcNAc...) asparagine glycans are attached at residues asparagine 94, asparagine 267, asparagine 287, asparagine 303, and asparagine 317. FG-GAP repeat units follow at residues 364-425, 431-492, 494-554, 561-619, 629-689, 701-767, and 785-837; these read SPSA…GLPP, NKEG…GRLS, SPNV…RNDK, EADW…SLGK, QSTI…GATR, ALLS…TLGD, and QYVL…FSSD. N-linked (GlcNAc...) asparagine glycosylation is found at asparagine 477, asparagine 496, asparagine 586, asparagine 599, and asparagine 655.

The protein belongs to the GPLD1 family. As to quaternary structure, monomer. As to expression, widely expressed.

The protein localises to the secreted. The enzyme catalyses a 6-(alpha-D-glucosaminyl)-1-(1,2-diacyl-sn-glycero-3-phospho)-1D-myo-inositol + H2O = 6-(alpha-D-glucosaminyl)-1D-myo-inositol + a 1,2-diacyl-sn-glycero-3-phosphate + H(+). Its function is as follows. This protein hydrolyzes the inositol phosphate linkage in proteins anchored by phosphatidylinositol glycans (GPI-anchor) thus releasing these proteins from the membrane. This Mus musculus (Mouse) protein is Phosphatidylinositol-glycan-specific phospholipase D (Gpld1).